Consider the following 555-residue polypeptide: MMSESEARPTNFIRQIIDADLDSGKHKSVHTRFPPEPNGYLHIGHAKSICLNFGIAQDYQGQCNLRFDDTNPEKEDIEYVESIKNDVNWLGFDWSGEICYSSNYFDKLYGFAVELINKGLAYVDELSPEQMREYRGNLTEPGKPSPYRDRSVAENLELFEKMKNGEVEEGIMSLRAKIDMASSFMVLRDPVIYRVRFATHHQTGDKWCIYPMYDFTHCISDALEGITHSICTLEFQDNRRLYDWVLDNITIDCQPRQYEFSRLNLEYTVMSKRKLNQLVTDNLVSGWDDPRMPTVSGLRRRGFTSASIREFCKRIGVTKQENTIEMSSLESCIRDDLNENAPRAMAVLDPVKIVIENFTGDTEVLTVSNHPNNSEMGTREVPFTREIWIEREDFREEANKKYKRLVLGKEVRLRGAYVIKAERIEKDAEGNITTIFCSYDNETLGVNPSDGRKVKGVIHWVSADAGLPAEIRLYDRLFTVANPAAADDFVTVINPESLTVLNGFVEPSLKVAEAEKAFQFERIGYFCVDSKDSSAEKLVFNRTVGLRDTWAKMGE.

The 'HIGH' region motif lies at 35 to 45 (PEPNGYLHIGH). ATP-binding positions include 36–38 (EPN) and 42–48 (HIGHAKS). L-glutamine contacts are provided by Asp-68 and Tyr-213. ATP-binding positions include Thr-232, 262 to 263 (RL), and 270 to 272 (MSK). Residues 269–273 (VMSKR) carry the 'KMSKS' region motif.

It belongs to the class-I aminoacyl-tRNA synthetase family. As to quaternary structure, monomer.

It localises to the cytoplasm. It catalyses the reaction tRNA(Gln) + L-glutamine + ATP = L-glutaminyl-tRNA(Gln) + AMP + diphosphate. The chain is Glutamine--tRNA ligase from Photobacterium profundum (strain SS9).